The chain runs to 1401 residues: DNA-directed RNA polymerase subunit beta (1401 aa).

It belongs to the RNA polymerase beta chain family. As to quaternary structure, the RNAP catalytic core consists of 2 alpha, 1 beta, 1 beta' and 1 omega subunit. When a sigma factor is associated with the core the holoenzyme is formed, which can initiate transcription.

It carries out the reaction RNA(n) + a ribonucleoside 5'-triphosphate = RNA(n+1) + diphosphate. DNA-dependent RNA polymerase catalyzes the transcription of DNA into RNA using the four ribonucleoside triphosphates as substrates. The polypeptide is DNA-directed RNA polymerase subunit beta (Desulforapulum autotrophicum (strain ATCC 43914 / DSM 3382 / VKM B-1955 / HRM2) (Desulfobacterium autotrophicum)).